The chain runs to 509 residues: ATP synthase subunit alpha (509 aa).

Residue 169–176 (GDRQTGKT) coordinates ATP.

This sequence belongs to the ATPase alpha/beta chains family. As to quaternary structure, F-type ATPases have 2 components, CF(1) - the catalytic core - and CF(0) - the membrane proton channel. CF(1) has five subunits: alpha(3), beta(3), gamma(1), delta(1), epsilon(1). CF(0) has three main subunits: a(1), b(2) and c(9-12). The alpha and beta chains form an alternating ring which encloses part of the gamma chain. CF(1) is attached to CF(0) by a central stalk formed by the gamma and epsilon chains, while a peripheral stalk is formed by the delta and b chains.

The protein resides in the cell inner membrane. The enzyme catalyses ATP + H2O + 4 H(+)(in) = ADP + phosphate + 5 H(+)(out). Produces ATP from ADP in the presence of a proton gradient across the membrane. The alpha chain is a regulatory subunit. In Parvibaculum lavamentivorans (strain DS-1 / DSM 13023 / NCIMB 13966), this protein is ATP synthase subunit alpha.